The following is a 267-amino-acid chain: Short chain dehydrogenase claC (267 aa).

Positions 27, 73, 100, and 133 each coordinate NADP(+). Active-site proton donor residues include Ser149 and Ser150. Positions 164, 168, and 199 each coordinate NADP(+). The active-site Proton acceptor is the Tyr164. Lys168 serves as the catalytic Lowers pKa of active site Tyr.

Belongs to the short-chain dehydrogenases/reductases (SDR) family.

It participates in pigment biosynthesis. In terms of biological role, non-reducing polyketide synthase; part of the gene cluster that mediates the biosynthesis of the bianthraquinone cladofulvin, a conidial pigment not required for virulence but that plays a role in fitness and resistance to environmental stresses including UV light and low-temperature stress. The pathway begins with the synthesis of atrochrysone thioester by the polyketide synthase (PKS) claG. The atrochrysone carboxyl ACP thioesterase claF then breaks the thioester bond and releases the atrochrysone carboxylic acid from claG. This compound is decarboxylated by claH to yield emodin, which is further converted to chrysophanol hydroquinone by the reductase claC and the dehydratase claB. The cytochrome monooxygenase P450 claM then catalyzes the dimerization of nataloe-emodin to cladofulvin. In Passalora fulva (Tomato leaf mold), this protein is Short chain dehydrogenase claC.